A 401-amino-acid chain; its full sequence is Nicotinate phosphoribosyltransferase (401 aa).

Phosphohistidine; by autocatalysis is present on H221.

It belongs to the NAPRTase family. Post-translationally, transiently phosphorylated on a His residue during the reaction cycle. Phosphorylation strongly increases the affinity for substrates and increases the rate of nicotinate D-ribonucleotide production. Dephosphorylation regenerates the low-affinity form of the enzyme, leading to product release.

The enzyme catalyses nicotinate + 5-phospho-alpha-D-ribose 1-diphosphate + ATP + H2O = nicotinate beta-D-ribonucleotide + ADP + phosphate + diphosphate. It functions in the pathway cofactor biosynthesis; NAD(+) biosynthesis; nicotinate D-ribonucleotide from nicotinate: step 1/1. In terms of biological role, catalyzes the synthesis of beta-nicotinate D-ribonucleotide from nicotinate and 5-phospho-D-ribose 1-phosphate at the expense of ATP. This Pectobacterium atrosepticum (strain SCRI 1043 / ATCC BAA-672) (Erwinia carotovora subsp. atroseptica) protein is Nicotinate phosphoribosyltransferase.